Here is a 172-residue protein sequence, read N- to C-terminus: MERVERIVRLTWKVSSQRIEKWHWLVRRQMAWATANNEEGCWWLYPHFMAYNEWYTCSKVVIIINRDIRLIVRSYWHLQIEVGCLSTYAVSIEAVVRPPPFEKEWCTEITPEVADHLIHLHFYDCFMDSAVMKAIRGEEVLKVCRFPAGHKAQGVLSLQFLCLRVIYGPEER.

Residue Thr-107 is modified to Phosphothreonine; by host. Positions 119–150 match the HCCH motif motif; the sequence is HLHFYDCFMDSAVMKAIRGEEVLKVCRFPAGH. Ser-157 carries the post-translational modification Phosphoserine; by host. A BC-box-like motif motif is present at residues 157–166; that stretch reads SLQFLCLRVI.

This sequence belongs to the primate lentivirus group Vif protein family. Homomultimer; in vitro and presumably in vivo. Interacts with viral Pr55Gag precursor and host APOBEC3G. The interaction between Vif and APOBEC3G is species-specific, which may play a role in restricting the replication of SIV to their host. Forms an E3 ligase complex by interacting with host CUL5 and elongin BC complex (ELOB and ELOC). In terms of processing, processed in virion by the viral protease. Post-translationally, highly phosphorylated on serine and threonine residues. Polyubiquitinated and degraded by the proteasome in the presence of APOBEC3G.

The protein resides in the host cytoplasm. It is found in the host cell membrane. The protein localises to the virion. Its function is as follows. Counteracts the innate antiviral activity of APOBEC3G. Forms a complex with host APOBEC3G thus preventing the entry of this lethally hypermutating enzyme into progeny virions. Functions as an adapter molecule, recruiting APOBEC3G to the ubiquitin-proteasome machinery. Targets APOBEC3G for degradation through the assembly with elongin BC complex, CUL5 and RBX1. Binds viral RNA and affects the stability of viral nucleoprotein core. May play a role in viral morphology. The protein is Virion infectivity factor (vif) of Simian immunodeficiency virus (isolate GB1) (SIV-mnd).